The following is a 161-amino-acid chain: Transcriptional repressor NrdR (161 aa).

Residues 3–34 (CPSCQHTDSRVLESRAADSGKSVRRRRECLNC) fold into a zinc finger. Residues 49-139 (ITVVKRSGTR…VYGKFSGISD (91 aa)) enclose the ATP-cone domain.

Belongs to the NrdR family. It depends on Zn(2+) as a cofactor.

Its function is as follows. Negatively regulates transcription of bacterial ribonucleotide reductase nrd genes and operons by binding to NrdR-boxes. The protein is Transcriptional repressor NrdR of Synechococcus sp. (strain RCC307).